Here is a 383-residue protein sequence, read N- to C-terminus: Lipid-A-disaccharide synthase (383 aa).

The protein belongs to the LpxB family.

The enzyme catalyses a lipid X + a UDP-2-N,3-O-bis[(3R)-3-hydroxyacyl]-alpha-D-glucosamine = a lipid A disaccharide + UDP + H(+). Its pathway is bacterial outer membrane biogenesis; LPS lipid A biosynthesis. Condensation of UDP-2,3-diacylglucosamine and 2,3-diacylglucosamine-1-phosphate to form lipid A disaccharide, a precursor of lipid A, a phosphorylated glycolipid that anchors the lipopolysaccharide to the outer membrane of the cell. This Aliivibrio fischeri (strain ATCC 700601 / ES114) (Vibrio fischeri) protein is Lipid-A-disaccharide synthase.